The primary structure comprises 459 residues: NADH-ubiquinone oxidoreductase chain 4 (459 aa).

The next 12 helical transmembrane spans lie at 20-42 (PKWL…LTLF), 61-81 (MIST…IIAS), 103-123 (LQAL…YIMF), 148-168 (IYFL…LLYL), 194-214 (FLWV…GVHL), 224-244 (PVAG…YGMI), 257-277 (LAYP…SICM), 284-303 (SLIA…GILI), 307-329 (WGFT…LFCL), 350-370 (IILP…MALP), 392-414 (TILL…YMSS), and 435-455 (LLLT…ELIW).

It belongs to the complex I subunit 4 family.

The protein localises to the mitochondrion membrane. It carries out the reaction a ubiquinone + NADH + 5 H(+)(in) = a ubiquinol + NAD(+) + 4 H(+)(out). Functionally, core subunit of the mitochondrial membrane respiratory chain NADH dehydrogenase (Complex I) that is believed to belong to the minimal assembly required for catalysis. Complex I functions in the transfer of electrons from NADH to the respiratory chain. The immediate electron acceptor for the enzyme is believed to be ubiquinone. The sequence is that of NADH-ubiquinone oxidoreductase chain 4 (MT-ND4) from Polypterus ornatipinnis (Ornate bichir).